Consider the following 84-residue polypeptide: Small ribosomal subunit protein uS17 (84 aa).

It belongs to the universal ribosomal protein uS17 family. Part of the 30S ribosomal subunit.

One of the primary rRNA binding proteins, it binds specifically to the 5'-end of 16S ribosomal RNA. The protein is Small ribosomal subunit protein uS17 of Sodalis glossinidius (strain morsitans).